A 124-amino-acid polypeptide reads, in one-letter code: UPF0299 membrane protein VIBHAR_02118 (124 aa).

4 helical membrane-spanning segments follow: residues 6-26 (LLQL…LGIG), 35-55 (VSVP…TLGL), 72-92 (MILL…MLLA), and 95-115 (LPII…LAWF).

It belongs to the UPF0299 family.

It localises to the cell inner membrane. This Vibrio campbellii (strain ATCC BAA-1116) protein is UPF0299 membrane protein VIBHAR_02118.